Here is a 276-residue protein sequence, read N- to C-terminus: NH(3)-dependent NAD(+) synthetase (276 aa).

Residue 43 to 50 (GISGGVDS) coordinates ATP. D49 contacts Mg(2+). A deamido-NAD(+)-binding site is contributed by R146. T166 contributes to the ATP binding site. Residue E171 participates in Mg(2+) binding. Deamido-NAD(+) is bound by residues K179 and D186. Residues K195 and T217 each contribute to the ATP site. 266–267 (HK) contributes to the deamido-NAD(+) binding site.

This sequence belongs to the NAD synthetase family. As to quaternary structure, homodimer.

It carries out the reaction deamido-NAD(+) + NH4(+) + ATP = AMP + diphosphate + NAD(+) + H(+). It functions in the pathway cofactor biosynthesis; NAD(+) biosynthesis; NAD(+) from deamido-NAD(+) (ammonia route): step 1/1. Its function is as follows. Catalyzes the ATP-dependent amidation of deamido-NAD to form NAD. Uses ammonia as a nitrogen source. This is NH(3)-dependent NAD(+) synthetase from Vibrio vulnificus (strain CMCP6).